Reading from the N-terminus, the 580-residue chain is Glutamine--tRNA ligase (580 aa).

Positions 41-51 (PEPNGYLHIGH) match the 'HIGH' region motif. ATP is bound by residues 42–44 (EPN) and 48–54 (HIGHAKA). L-glutamine-binding residues include Asp-74 and Tyr-218. ATP-binding positions include Thr-237, 285–286 (RL), and 293–295 (MSK). Residues 292–296 (VMSKR) carry the 'KMSKS' region motif.

The protein belongs to the class-I aminoacyl-tRNA synthetase family. Monomer.

Its subcellular location is the cytoplasm. The enzyme catalyses tRNA(Gln) + L-glutamine + ATP = L-glutaminyl-tRNA(Gln) + AMP + diphosphate. This is Glutamine--tRNA ligase from Xylella fastidiosa (strain Temecula1 / ATCC 700964).